The sequence spans 165 residues: MVKSIWVAGGCFWGIQKYFDSIKGVRHTIVGYSQGNVINPSYEQVCTQTTNHTETVQVDYDDRFVSLTSILEHLYQIIDPFSLNKQGEDIGNQYRSGIYYVDHEDALIIKNFLLQKQNQTSKKIMIEVHKLHNFNIAEEYHQKYLDKNPNGYCHVNLSLSKKRFN.

C11 is an active-site residue.

The protein belongs to the MsrA Met sulfoxide reductase family.

It carries out the reaction L-methionyl-[protein] + [thioredoxin]-disulfide + H2O = L-methionyl-(S)-S-oxide-[protein] + [thioredoxin]-dithiol. The catalysed reaction is [thioredoxin]-disulfide + L-methionine + H2O = L-methionine (S)-S-oxide + [thioredoxin]-dithiol. Has an important function as a repair enzyme for proteins that have been inactivated by oxidation. Catalyzes the reversible oxidation-reduction of methionine sulfoxide in proteins to methionine. The polypeptide is Peptide methionine sulfoxide reductase MsrA (Ureaplasma urealyticum serovar 10 (strain ATCC 33699 / Western)).